Consider the following 142-residue polypeptide: Large ribosomal subunit protein uL13 (142 aa).

It belongs to the universal ribosomal protein uL13 family. In terms of assembly, part of the 50S ribosomal subunit.

Its function is as follows. This protein is one of the early assembly proteins of the 50S ribosomal subunit, although it is not seen to bind rRNA by itself. It is important during the early stages of 50S assembly. The chain is Large ribosomal subunit protein uL13 from Cupriavidus metallidurans (strain ATCC 43123 / DSM 2839 / NBRC 102507 / CH34) (Ralstonia metallidurans).